The sequence spans 122 residues: Large ribosomal subunit protein uL14 (122 aa).

It belongs to the universal ribosomal protein uL14 family. In terms of assembly, part of the 50S ribosomal subunit. Forms a cluster with proteins L3 and L19. In the 70S ribosome, L14 and L19 interact and together make contacts with the 16S rRNA in bridges B5 and B8.

Binds to 23S rRNA. Forms part of two intersubunit bridges in the 70S ribosome. The polypeptide is Large ribosomal subunit protein uL14 (Methylobacterium radiotolerans (strain ATCC 27329 / DSM 1819 / JCM 2831 / NBRC 15690 / NCIMB 10815 / 0-1)).